The primary structure comprises 172 residues: Mitochondrial import inner membrane translocase subunit Tim17-B (172 aa).

C9 and C78 are joined by a disulfide. 3 consecutive transmembrane segments (helical) span residues 17–37 (CGGA…IKGF), 61–77 (QIGG…STID), and 113–133 (VGSA…GILL). The tract at residues 146 to 172 (PFLEDPSQLPPKDGTPAPGYPSYQQYH) is disordered.

The protein belongs to the Tim17/Tim22/Tim23 family. Component of the TIM23 complex at least composed of TIMM23, TIMM17 (TIMM17A or TIMM17B) and TIMM50. The complex interacts with the TIMM44 component of the PAM complex and with DNAJC15. Post-translationally, forms one disulfide bond. In terms of tissue distribution, expression is abundant in heart and skeletal muscle, intermediate in brain, and weak in pancreas, placenta, kidney and liver.

It localises to the mitochondrion inner membrane. Functionally, essential component of the TIM23 complex, a complex that mediates the translocation of transit peptide-containing proteins across the mitochondrial inner membrane. This Homo sapiens (Human) protein is Mitochondrial import inner membrane translocase subunit Tim17-B (TIMM17B).